A 576-amino-acid polypeptide reads, in one-letter code: MAGUK p55 subfamily member 7 (576 aa).

L27 domains lie at 10-64 and 65-122; these read SEMG…EDCA and PTPV…YDPE. Residues 139–220 form the PDZ domain; the sequence is IIRLVKNKEP…AITFKVVPGI (82 aa). An SH3 domain is found at 228 to 298; that stretch reads EPKMFIKALF…PSKHFQERRL (71 aa). The Guanylate kinase-like domain maps to 368–560; it reads HRLVVLVGPT…AFSELKQALK (193 aa).

The protein belongs to the MAGUK family.

It is found in the membrane. The protein resides in the cell junction. It localises to the tight junction. Its subcellular location is the adherens junction. In terms of biological role, acts as an important adapter that promotes epithelial cell polarity and tight junction formation. Involved in the assembly of protein complexes at sites of cell-cell contact. In Danio rerio (Zebrafish), this protein is MAGUK p55 subfamily member 7 (mpp7).